Consider the following 216-residue polypeptide: ATP synthase subunit a (216 aa).

A run of 7 helical transmembrane segments spans residues 1 to 21, 62 to 82, 88 to 108, 119 to 139, 149 to 169, 174 to 194, and 196 to 216; these read MEYS…IFVL, LIAA…VPGF, NINT…FEGF, FMGP…ISHI, LFAN…LVIK, LVVS…AIFI, and TYIF…HEEH.

This sequence belongs to the ATPase A chain family. As to quaternary structure, F-type ATPases have 2 components, CF(1) - the catalytic core - and CF(0) - the membrane proton channel. CF(1) has five subunits: alpha(3), beta(3), gamma(1), delta(1), epsilon(1). CF(0) has three main subunits: a(1), b(2) and c(9-12). The alpha and beta chains form an alternating ring which encloses part of the gamma chain. CF(1) is attached to CF(0) by a central stalk formed by the gamma and epsilon chains, while a peripheral stalk is formed by the delta and b chains.

It localises to the cell inner membrane. In terms of biological role, key component of the proton channel; it plays a direct role in the translocation of protons across the membrane. In Aquifex aeolicus (strain VF5), this protein is ATP synthase subunit a.